The chain runs to 122 residues: Large ribosomal subunit protein bL12 (122 aa).

Belongs to the bacterial ribosomal protein bL12 family. In terms of assembly, homodimer. Part of the ribosomal stalk of the 50S ribosomal subunit. Forms a multimeric L10(L12)X complex, where L10 forms an elongated spine to which 2 to 4 L12 dimers bind in a sequential fashion. Binds GTP-bound translation factors.

Forms part of the ribosomal stalk which helps the ribosome interact with GTP-bound translation factors. Is thus essential for accurate translation. The sequence is that of Large ribosomal subunit protein bL12 from Mycoplasma mycoides subsp. mycoides SC (strain CCUG 32753 / NCTC 10114 / PG1).